A 135-amino-acid chain; its full sequence is Large ribosomal subunit protein bL21 (135 aa).

Residues glutamate 114 to glutamate 135 are disordered. The segment covering threonine 125–glutamate 135 has biased composition (acidic residues).

It belongs to the bacterial ribosomal protein bL21 family. Part of the 50S ribosomal subunit. Contacts protein L20.

In terms of biological role, this protein binds to 23S rRNA in the presence of protein L20. This chain is Large ribosomal subunit protein bL21, found in Nostoc punctiforme (strain ATCC 29133 / PCC 73102).